A 305-amino-acid polypeptide reads, in one-letter code: Tetraacyldisaccharide 4'-kinase (305 aa).

39–46 (SVGGNGKT) is an ATP binding site.

Belongs to the LpxK family.

It catalyses the reaction a lipid A disaccharide + ATP = a lipid IVA + ADP + H(+). Its pathway is glycolipid biosynthesis; lipid IV(A) biosynthesis; lipid IV(A) from (3R)-3-hydroxytetradecanoyl-[acyl-carrier-protein] and UDP-N-acetyl-alpha-D-glucosamine: step 6/6. In terms of biological role, transfers the gamma-phosphate of ATP to the 4'-position of a tetraacyldisaccharide 1-phosphate intermediate (termed DS-1-P) to form tetraacyldisaccharide 1,4'-bis-phosphate (lipid IVA). The sequence is that of Tetraacyldisaccharide 4'-kinase from Pseudoalteromonas atlantica (strain T6c / ATCC BAA-1087).